The following is a 429-amino-acid chain: Glutamate--tRNA ligase 1 (429 aa).

The 'HIGH' region motif lies at 6 to 16; the sequence is PSPTGDMHIGN. A 'KMSKS' region motif is present at residues 235–239; it reads KMSKR. Lys-238 serves as a coordination point for ATP.

This sequence belongs to the class-I aminoacyl-tRNA synthetase family. Glutamate--tRNA ligase type 1 subfamily. As to quaternary structure, monomer.

It localises to the cytoplasm. It catalyses the reaction tRNA(Glu) + L-glutamate + ATP = L-glutamyl-tRNA(Glu) + AMP + diphosphate. In terms of biological role, catalyzes the attachment of glutamate to tRNA(Glu) in a two-step reaction: glutamate is first activated by ATP to form Glu-AMP and then transferred to the acceptor end of tRNA(Glu). The sequence is that of Glutamate--tRNA ligase 1 from Campylobacter fetus subsp. fetus (strain 82-40).